We begin with the raw amino-acid sequence, 1336 residues long: Misshapen-like kinase 1 (1336 aa).

The 265-residue stretch at Phe-25–Ile-289 folds into the Protein kinase domain. ATP contacts are provided by residues Val-31 to Val-39 and Lys-54. Asp-153 functions as the Proton acceptor in the catalytic mechanism. Disordered regions lie at residues Arg-299–Gly-347, Lys-363–Pro-383, and Gln-395–Met-890. The segment covering Glu-317–His-333 has biased composition (acidic residues). 2 positions are modified to phosphoserine: Ser-324 and Ser-326. The segment covering Gln-371–Gln-380 has biased composition (low complexity). Over residues Arg-396–Gln-466 the composition is skewed to basic and acidic residues. Residues Gln-479–Gln-496 show a composition bias toward low complexity. Arg-502 and Arg-510 each carry omega-N-methylarginine. A compositionally biased stretch (basic and acidic residues) spans Ala-519–Arg-529. A compositionally biased stretch (polar residues) spans Asn-531 to Ser-544. Positions Pro-548–Pro-562 are enriched in pro residues. Residues Arg-599 to Arg-609 show a composition bias toward polar residues. Residues Pro-622–Pro-632 are compositionally biased toward low complexity. A Phosphoserine modification is found at Ser-643. Residues Gln-672–Ser-684 are compositionally biased toward polar residues. Position 703 is a phosphoserine (Ser-703). Over residues Pro-718–Pro-731 the composition is skewed to pro residues. Basic and acidic residues predominate over residues Asp-738–Asp-750. Phosphoserine occurs at positions 756, 765, 781, 782, and 786. A compositionally biased stretch (basic and acidic residues) spans Leu-808 to Met-825. Residues Glu-832–Pro-848 show a composition bias toward acidic residues. The mediates interaction with RAP2A stretch occupies residues Met-870–Trp-1336. The residue at position 895 (Thr-895) is a Phosphothreonine. The interval Gly-909–Leu-946 is disordered. Positions Pro-919–Pro-933 are enriched in polar residues. In terms of domain architecture, CNH spans Asn-1023–Val-1310.

The protein belongs to the protein kinase superfamily. STE Ser/Thr protein kinase family. STE20 subfamily. As to quaternary structure, interacts with RAP2A and NCK1. Interacts with TANC1. Mg(2+) serves as cofactor. Autophosphorylated.

Its subcellular location is the cytoplasm. It localises to the postsynaptic density. It is found in the cell projection. The protein localises to the axon. The protein resides in the dendrite. It carries out the reaction L-seryl-[protein] + ATP = O-phospho-L-seryl-[protein] + ADP + H(+). The enzyme catalyses L-threonyl-[protein] + ATP = O-phospho-L-threonyl-[protein] + ADP + H(+). Serine/threonine kinase which acts as a negative regulator of Ras-related Rap2-mediated signal transduction to control neuronal structure and AMPA receptor trafficking. Required for normal synaptic density, dendrite complexity, as well as surface AMPA receptor expression in hippocampal neurons. Can activate the JNK and MAPK14/p38 pathways and mediates stimulation of the stress-activated protein kinase MAPK14/p38 MAPK downstream of the Raf/ERK pathway. Phosphorylates TANC1 upon stimulation by RAP2A, MBP and SMAD1. Has an essential function in negative selection of thymocytes, perhaps by coupling NCK1 to activation of JNK1. Activator of the Hippo signaling pathway which plays a pivotal role in organ size control and tumor suppression by restricting proliferation and promoting apoptosis. MAP4Ks act in parallel to and are partially redundant with STK3/MST2 and STK4/MST2 in the phosphorylation and activation of LATS1/2, and establish MAP4Ks as components of the expanded Hippo pathway. The polypeptide is Misshapen-like kinase 1 (Mink1) (Rattus norvegicus (Rat)).